Reading from the N-terminus, the 803-residue chain is Na(+)/H(+) antiporter subunit A1 (803 aa).

19 consecutive transmembrane segments (helical) span residues 1 to 21, 30 to 50, 79 to 99, 117 to 137, 166 to 186, 208 to 228, 265 to 285, 300 to 320, 337 to 357, 377 to 397, 427 to 447, 472 to 492, 522 to 542, 591 to 611, 621 to 641, 646 to 666, 671 to 691, 707 to 727, and 764 to 784; these read MSLLHIAVILPLIFALIIPIL, LGWFVLPIPVVLFIYFLSLIS, LSILFSLLITGIGSLVVLYSI, LFMGAMLGVVLSDNLIILYLF, LIITVFGGLSLLGGFILISLA, FIFAMVLIMLGAFTKSAQVPF, LFAISQGWIWTITLVGLITLF, ILAFSTVSQLGMIMSMLGIGA, FTAAVFHLVNHATFKGALFMI, LTIMPISFTITVITALSMAGI, LGIVFPILAIVGSIFTFVYSI, ILMLLSPIILAVLVVVFGLFP, GITPAFISTLIIWILGILLLL, LVIIFGMLIVVTIVTLLSVPF, IHIYEIAILILLIIAAFMVVI, LFSVIMLGVVGYSVSVLFVFF, LALTQFVVESISTALFLLCFY, LTNALISIGVGLVVIILGLIA, and MDTLFESSVLGIAGLGVYTMI.

The protein belongs to the CPA3 antiporters (TC 2.A.63) subunit A family. May form a heterooligomeric complex that consists of seven subunits: mnhA1, mnhB1, mnhC1, mnhD1, mnhE1, mnhF1 and mnhG1.

It localises to the cell membrane. Functionally, mnh complex is a Na(+)/H(+) antiporter involved in Na(+) excretion. The chain is Na(+)/H(+) antiporter subunit A1 (mnhA1) from Staphylococcus haemolyticus (strain JCSC1435).